The following is a 391-amino-acid chain: Small ribosomal subunit protein mS29 (391 aa).

Residues 1 to 17 (MLTGITRLFSRVQKLDP) constitute a mitochondrion transit peptide. The tract at residues 30 to 59 (NSQVPAERPRTVSRTSDSDPAKHGEQHEGQ) is disordered. Over residues 45 to 59 (SDSDPAKHGEQHEGQ) the composition is skewed to basic and acidic residues. N6-acetyllysine is present on residues lysine 168 and lysine 200.

It belongs to the mitochondrion-specific ribosomal protein mS29 family. Component of the mitochondrial ribosome small subunit (28S) which comprises a 12S rRNA and about 30 distinct proteins. Interacts with DELE1. Interacts with NOA1.

It localises to the mitochondrion. It carries out the reaction GTP + H2O = GDP + phosphate + H(+). As a component of the mitochondrial small ribosomal subunit, it plays a role in the translation of mitochondrial mRNAs. Involved in mediating interferon-gamma-induced cell death. Displays GTPase activity in vitro. The chain is Small ribosomal subunit protein mS29 from Mus musculus (Mouse).